The chain runs to 127 residues: Small ribosomal subunit protein uS12 (127 aa).

D89 is subject to 3-methylthioaspartic acid. Positions 102–127 (LDTAGVKDRKQGRSKYGTKRPKEAKK) are disordered. A compositionally biased stretch (basic residues) spans 113-127 (GRSKYGTKRPKEAKK).

The protein belongs to the universal ribosomal protein uS12 family. As to quaternary structure, part of the 30S ribosomal subunit. Contacts proteins S8 and S17. May interact with IF1 in the 30S initiation complex.

In terms of biological role, with S4 and S5 plays an important role in translational accuracy. Its function is as follows. Interacts with and stabilizes bases of the 16S rRNA that are involved in tRNA selection in the A site and with the mRNA backbone. Located at the interface of the 30S and 50S subunits, it traverses the body of the 30S subunit contacting proteins on the other side and probably holding the rRNA structure together. The combined cluster of proteins S8, S12 and S17 appears to hold together the shoulder and platform of the 30S subunit. The chain is Small ribosomal subunit protein uS12 from Nostoc punctiforme (strain ATCC 29133 / PCC 73102).